A 276-amino-acid polypeptide reads, in one-letter code: Large ribosomal subunit protein uL2 (276 aa).

2 disordered regions span residues 35–55 (APLHKKGGRNNQGRLTVRHQG) and 222–276 (GSVM…RRKK). The span at 258–276 (KTRKKNKHSDKYIVRRRKK) shows a compositional bias: basic residues.

It belongs to the universal ribosomal protein uL2 family. As to quaternary structure, part of the 50S ribosomal subunit. Forms a bridge to the 30S subunit in the 70S ribosome.

One of the primary rRNA binding proteins. Required for association of the 30S and 50S subunits to form the 70S ribosome, for tRNA binding and peptide bond formation. It has been suggested to have peptidyltransferase activity; this is somewhat controversial. Makes several contacts with the 16S rRNA in the 70S ribosome. The polypeptide is Large ribosomal subunit protein uL2 (Shouchella clausii (strain KSM-K16) (Alkalihalobacillus clausii)).